Reading from the N-terminus, the 340-residue chain is Methionine import ATP-binding protein MetN 2 (340 aa).

The ABC transporter domain occupies 2-241 (ITLQNVVKEY…PQEKVTQRFV (240 aa)). 38–45 (GYSGAGKS) provides a ligand contact to ATP.

It belongs to the ABC transporter superfamily. Methionine importer (TC 3.A.1.24) family. In terms of assembly, the complex is composed of two ATP-binding proteins (MetN), two transmembrane proteins (MetI) and a solute-binding protein (MetQ).

It is found in the cell membrane. The catalysed reaction is L-methionine(out) + ATP + H2O = L-methionine(in) + ADP + phosphate + H(+). The enzyme catalyses D-methionine(out) + ATP + H2O = D-methionine(in) + ADP + phosphate + H(+). Functionally, part of the ABC transporter complex MetNIQ involved in methionine import. Responsible for energy coupling to the transport system. The protein is Methionine import ATP-binding protein MetN 2 of Listeria monocytogenes serotype 4b (strain F2365).